Consider the following 178-residue polypeptide: CASP-like protein 4D1 (178 aa).

Over 1–14 the chain is Cytoplasmic; the sequence is MAPPPPSPPSVTLR. The chain crosses the membrane as a helical span at residues 15-35; it reads TVLLLLRVLTAAFLVITVVLI. The Extracellular segment spans residues 36-60; the sequence is STNTVTLEVSSTSIKMRFNDVYAYR. Residues 61–81 form a helical membrane-spanning segment; sequence YMLSAAVIGLLYAVVQLFLTI. Topologically, residues 82 to 149 are cytoplasmic; that stretch reads SQFATGTTHP…KFFSKGYASA (68 aa). The helical transmembrane segment at 150 to 170 threads the bilayer; sequence SLLLFAFVSLAVLSVFSSLAL. The Extracellular portion of the chain corresponds to 171–178; that stretch reads SKRPIQVS.

It belongs to the Casparian strip membrane proteins (CASP) family. Homodimer and heterodimers.

It localises to the cell membrane. The sequence is that of CASP-like protein 4D1 from Arabidopsis lyrata subsp. lyrata (Lyre-leaved rock-cress).